The following is a 1341-amino-acid chain: DNA-directed RNA polymerase subunit Rpo1N (1341 aa).

Positions 62, 65, 72, 75, 102, 105, 149, and 152 each coordinate Zn(2+). 3 residues coordinate Mg(2+): Asp918, Asp920, and Asp922.

This sequence belongs to the RNA polymerase beta' chain family. In terms of assembly, part of the RNA polymerase complex. Mg(2+) serves as cofactor. Requires Zn(2+) as cofactor. This protein undergoes a protein self splicing that involves a post-translational excision of the intervening region (intein) followed by peptide ligation.

It localises to the cytoplasm. The catalysed reaction is RNA(n) + a ribonucleoside 5'-triphosphate = RNA(n+1) + diphosphate. In terms of biological role, DNA-dependent RNA polymerase (RNAP) catalyzes the transcription of DNA into RNA using the four ribonucleoside triphosphates as substrates. Forms the clamp head domain. In Methanocaldococcus jannaschii (strain ATCC 43067 / DSM 2661 / JAL-1 / JCM 10045 / NBRC 100440) (Methanococcus jannaschii), this protein is DNA-directed RNA polymerase subunit Rpo1N.